The following is a 144-amino-acid chain: Translation initiation factor 5A (144 aa).

At Lys38 the chain carries Hypusine.

This sequence belongs to the eIF-5A family.

The protein resides in the cytoplasm. In terms of biological role, functions by promoting the formation of the first peptide bond. The polypeptide is Translation initiation factor 5A (Nanoarchaeum equitans (strain Kin4-M)).